Consider the following 540-residue polypeptide: Upstream-binding protein 1 (540 aa).

Serine 22 carries the phosphoserine modification. Positions 60-296 (EHPPFQYVMC…EQKKSSKRTL (237 aa)) constitute a Grh/CP2 DB domain. Disordered regions lie at residues 236 to 270 (KPKG…DTTI) and 285 to 368 (EHEQ…QPSA). Over residues 238–262 (KGADRKQKTDREKMEKRTAHEKEKY) the composition is skewed to basic and acidic residues. The segment covering 320 to 368 (YVNNSPSPAPTFTSPQQSTCSVPDSNSSSPNHQGDGASQTSGEQIQPSA) has biased composition (polar residues). Phosphoserine is present on residues serine 390 and serine 393.

This sequence belongs to the grh/CP2 family. CP2 subfamily. As to quaternary structure, interacts with TFCP2. Interacts with PIAS1, and is probably part of a complex containing TFCP2, UBP1 and PIAS1. As to expression, expressed in adrenal tissue, JEG-3, NCI-H295A, Hep-G2 and HeLa cell lines.

It localises to the nucleus. Functionally, functions as a transcriptional activator in a promoter context-dependent manner. Modulates the placental expression of CYP11A1. Involved in regulation of the alpha-globin gene in erythroid cells. Activation of the alpha-globin promoter in erythroid cells is via synergistic interaction with TFCP2. Involved in regulation of the alpha-globin gene in erythroid cells. Binds strongly to sequences around the HIV-1 initiation site and weakly over the TATA-box. Represses HIV-1 transcription by inhibiting the binding of TFIID to the TATA-box. The protein is Upstream-binding protein 1 (UBP1) of Homo sapiens (Human).